Here is a 297-residue protein sequence, read N- to C-terminus: MSKIFVNPSAIRAGLADLEMAEETVDLINRNIEDNQAHLQGEPIEVDDLPEDMKRLHLDDEKSSNLGEMVRVGEGKYREDFQMDEGEDPNLLFQSYLDNVGVQIVRQMRSGERFLKIWSQTVEEIVSYVTVNFPNPPRRSSENKSTQTTGRELKKETTSAFSQRESQPSKARMVAQVAPGPPALEWSATNEEDDLSVEAEIAHQIAESFSKKYKFPSRSSGIFLYNFEQLKMNLDDIVKEAKNVPGVTRLAHDGSKIPLRCVLGYVALANSKKFQLLVEADKLSKIMQDDLNRYTSC.

The short motif at 49–58 (LPEDMKRLHL) is the Nuclear export signal element. 2 positions are modified to phosphoserine; by host: S63 and S64. A disordered region spans residues 134 to 176 (PNPPRRSSENKSTQTTGRELKKETTSAFSQRESQPSKARMVAQ). The DYNLL1 and DYNLL2 binding stretch occupies residues 138-172 (RRSSENKSTQTTGRELKKETTSAFSQRESQPSKAR). Residues 158–169 (TSAFSQRESQPS) are compositionally biased toward polar residues. Phosphoserine; by host PKC is present on residues S162 and S210. A Nuclear localization signal motif is present at residues 211 to 214 (KKYK). The residue at position 271 (S271) is a Phosphoserine; by host PKC.

This sequence belongs to the lyssavirus protein P family. Homotrimer when phosphorylated. This trimer is stabilized by binding to the L protein. Binds soluble protein N, and ribonucleocapsid. Interacts with host DYNLL1 and DYNLL2; this interaction may play a role in intracellular microtubule-dependent virus transport of incoming virus. Interacts with host STAT1, STAT2 and PML. Interacts with host TBK1. In terms of assembly, binds host PML. Post-translationally, phosphorylated by host PKC and by an unknown kinase.

The protein localises to the virion. Its subcellular location is the host cytoplasm. It localises to the host nucleus. Its function is as follows. Non catalytic polymerase cofactor and regulatory protein that plays a role in viral transcription and replication. Stabilizes the RNA polymerase L to the N-RNA template and binds the soluble protein N, preventing it from encapsidating non-genomic RNA. Also inhibits host IFN-alpha and IFN-beta signaling by binding and retaining phosphorylated STAT1 in the cytoplasm or by inhibiting the DNA binding of STAT1 in the nucleus. Might be involved, through interaction with host dynein, in intracellular microtubule-dependent virus transport of incoming virus from the synapse toward the cell body. Inhibits interferon induction pathways by interacting with host TBK1 and preventing the formation of dynamic cytoplasmic condensates that have liquid properties and that are essential for interferon production. This Rabies virus (strain China/MRV) (RABV) protein is Phosphoprotein (P).